A 348-amino-acid chain; its full sequence is Caricain (348 aa).

The N-terminal stretch at 1–16 is a signal peptide; that stretch reads MAMIPSISKLLFVAIC. Positions 17-132 are cleaved as a propeptide — activation peptide; that stretch reads LFVHMSVSFG…EEFINEDTVN (116 aa). Residue Asn86 is glycosylated (N-linked (GlcNAc...) asparagine). 3 disulfides stabilise this stretch: Cys154–Cys195, Cys188–Cys227, and Cys285–Cys336. Residue Cys157 is part of the active site. Position 157 (Cys157) interacts with E64. Catalysis depends on residues His291 and Asn311.

The protein belongs to the peptidase C1 family. In terms of assembly, monomer.

The catalysed reaction is Hydrolysis of proteins with broad specificity for peptide bonds, similar to those of papain and chymopapain.. With respect to regulation, repressed by the active-site-directed cysteine protease inhibitor E64 (L-trans-epoxysuccinyl-leucylamide-(4-guanido)-butane) produced by Aspergillus japonicus. Its function is as follows. Cysteine proteinase with a high level of diversity in substrate specificity. The protein is Caricain of Carica papaya (Papaya).